A 101-amino-acid chain; its full sequence is Urease subunit beta (101 aa).

Belongs to the urease beta subunit family. In terms of assembly, heterotrimer of UreA (gamma), UreB (beta) and UreC (alpha) subunits. Three heterotrimers associate to form the active enzyme.

It is found in the cytoplasm. The catalysed reaction is urea + 2 H2O + H(+) = hydrogencarbonate + 2 NH4(+). It functions in the pathway nitrogen metabolism; urea degradation; CO(2) and NH(3) from urea (urease route): step 1/1. This chain is Urease subunit beta, found in Pseudomonas aeruginosa (strain LESB58).